The following is a 114-amino-acid chain: DNA-directed RNA polymerase subunit omega (114 aa).

The protein belongs to the RNA polymerase subunit omega family. As to quaternary structure, the RNAP catalytic core consists of 2 alpha, 1 beta, 1 beta' and 1 omega subunit. When a sigma factor is associated with the core the holoenzyme is formed, which can initiate transcription.

It carries out the reaction RNA(n) + a ribonucleoside 5'-triphosphate = RNA(n+1) + diphosphate. Promotes RNA polymerase assembly. Latches the N- and C-terminal regions of the beta' subunit thereby facilitating its interaction with the beta and alpha subunits. The polypeptide is DNA-directed RNA polymerase subunit omega (Novosphingobium aromaticivorans (strain ATCC 700278 / DSM 12444 / CCUG 56034 / CIP 105152 / NBRC 16084 / F199)).